A 175-amino-acid chain; its full sequence is ADTNAPLCLCDEPGILGRNQLVTPEVKEKIEKAVEAVAEESGVSGRGFSLFSHHPVFRECGKYECRTVRPEHTRCYNFPPFVHFTSECPVSTRDCEPVFGYTVAGEFRVIVQAPRAGFRQCVWQHKCRYGSNNCGFSGRCTQQRSVVRLVTYNLEKDGFLCESFRTCCGCPCRNY.

8 disulfide bridges follow: cysteine 8–cysteine 167, cysteine 10–cysteine 95, cysteine 60–cysteine 161, cysteine 65–cysteine 121, cysteine 75–cysteine 168, cysteine 88–cysteine 140, cysteine 127–cysteine 170, and cysteine 134–cysteine 172.

It belongs to the coagulin family. Coagulogen is cleaved after Arg-18 and Arg-46 by a clotting enzyme contained in the hemocyte and activated by a bacterial endotoxin (lipopolysaccharide). This cleavage releases the peptide C and leaves 2 chains of coagulin, A and B, linked by two disulfide bonds. Coagulin molecules interlink to form a gel. Hemolymph.

It is found in the secreted. Its function is as follows. Coagulogen is a gel-forming protein of hemolymph; it hinders the spread of invaders by immobilizing them. This is Coagulogen from Carcinoscorpius rotundicauda (Mangrove horseshoe crab).